The following is a 757-amino-acid chain: Endonuclease MutS2 (757 aa).

321-328 (GPNMGGKT) is a binding site for ATP. In terms of domain architecture, Smr spans 681–756 (IDIRGMTVEE…GTGVTVVEVK (76 aa)).

It belongs to the DNA mismatch repair MutS family. MutS2 subfamily. Homodimer. Binds to stalled ribosomes, contacting rRNA.

Functionally, endonuclease that is involved in the suppression of homologous recombination and thus may have a key role in the control of bacterial genetic diversity. Its function is as follows. Acts as a ribosome collision sensor, splitting the ribosome into its 2 subunits. Detects stalled/collided 70S ribosomes which it binds and splits by an ATP-hydrolysis driven conformational change. Acts upstream of the ribosome quality control system (RQC), a ribosome-associated complex that mediates the extraction of incompletely synthesized nascent chains from stalled ribosomes and their subsequent degradation. Probably generates substrates for RQC. The chain is Endonuclease MutS2 from Thermotoga sp. (strain RQ2).